The sequence spans 135 residues: Probable histone H2A.7 (135 aa).

It belongs to the histone H2A family. In terms of assembly, the nucleosome is a histone octamer containing two molecules each of H2A, H2B, H3 and H4 assembled in one H3-H4 heterotetramer and two H2A-H2B heterodimers. The octamer wraps approximately 147 bp of DNA.

It is found in the nucleus. Its subcellular location is the chromosome. Its function is as follows. Core component of nucleosome. Nucleosomes wrap and compact DNA into chromatin, limiting DNA accessibility to the cellular machineries which require DNA as a template. Histones thereby play a central role in transcription regulation, DNA repair, DNA replication and chromosomal stability. DNA accessibility is regulated via a complex set of post-translational modifications of histones, also called histone code, and nucleosome remodeling. This Oryza sativa subsp. indica (Rice) protein is Probable histone H2A.7.